The primary structure comprises 393 residues: G protein-activated inward rectifier potassium channel 3 (393 aa).

A disordered region spans residues 1 to 23 (MAQENAAFSPGQEEPPRRRGRQR). At 1–57 (MAQENAAFSPGQEEPPRRRGRQRYVEKDGRCNVQQGNVRETYRYLTDLFTTLVDLQW) the chain is on the cytoplasmic side. Residues 58–82 (RLSLLFFVLAYALTWLFFGAIWWLI) traverse the membrane as a helical segment. At 83–106 (AYGRGDLEHLEDTAWTPCVNNLNG) the chain is on the extracellular side. An intramembrane region (helical; Pore-forming) is located at residues 107–118 (FVAAFLFSIETE). The pore-forming intramembrane region spans 119–125 (TTIGYGH). Positions 120-125 (TIGYGH) match the Selectivity filter motif. Residues 126-134 (RVITDQCPE) are Extracellular-facing. Residues 135-156 (GIVLLLLQAILGSMVNAFMVGC) traverse the membrane as a helical segment. Over 157–393 (MFVKISQPNK…LPPPESESKV (237 aa)) the chain is Cytoplasmic. Residues 360-393 (KVEEEGAGEGAGGEAGADKEQNGCLPPPESESKV) are disordered. The span at 384–393 (LPPPESESKV) shows a compositional bias: pro residues. A PDZ-binding motif is present at residues 390 to 393 (ESKV).

Belongs to the inward rectifier-type potassium channel (TC 1.A.2.1) family. KCNJ9 subfamily. In terms of assembly, associates with KCNJ3/GIRK1 to form a G-protein-activated heteromultimer pore-forming unit. Interacts (via PDZ-binding motif) with SNX27 (via PDZ domain); the interaction is required when endocytosed to prevent degradation in lysosomes and promote recycling to the plasma membrane.

Its subcellular location is the membrane. The enzyme catalyses K(+)(in) = K(+)(out). Its function is as follows. Inward rectifier potassium channels are characterized by a greater tendency to allow potassium to flow into the cell rather than out of it. Their voltage dependence is regulated by the concentration of extracellular potassium; as external potassium is raised, the voltage range of the channel opening shifts to more positive voltages. The inward rectification is mainly due to the blockage of outward current by internal magnesium, This receptor is controlled by G proteins. Unable to produce channel activity when expressed alone. Forms a functional channel in association with KCNJ3/GIRK1. The sequence is that of G protein-activated inward rectifier potassium channel 3 (KCNJ9) from Homo sapiens (Human).